Here is a 508-residue protein sequence, read N- to C-terminus: Mitochondrial distribution and morphology protein 10 (508 aa).

Residues 160–195 (PAHPTSTRPTPPQTPPSHTRQPSEPSTPAPSPTPGN) are disordered.

The protein belongs to the MDM10 family. As to quaternary structure, component of the ER-mitochondria encounter structure (ERMES) or MDM complex, composed of MMM1, MDM10, MDM12 and MDM34. Associates with the mitochondrial outer membrane sorting assembly machinery SAM(core) complex.

Its subcellular location is the mitochondrion outer membrane. Its function is as follows. Component of the ERMES/MDM complex, which serves as a molecular tether to connect the endoplasmic reticulum and mitochondria. Components of this complex are involved in the control of mitochondrial shape and protein biogenesis and may function in phospholipid exchange. MDM10 is involved in the late assembly steps of the general translocase of the mitochondrial outer membrane (TOM complex). Functions in the TOM40-specific route of the assembly of outer membrane beta-barrel proteins, including the association of TOM40 with the receptor TOM22 and small TOM proteins. Can associate with the SAM(core) complex as well as the MDM12-MMM1 complex, both involved in late steps of the major beta-barrel assembly pathway, that is responsible for biogenesis of all outer membrane beta-barrel proteins. May act as a switch that shuttles between both complexes and channels precursor proteins into the TOM40-specific pathway. Plays a role in mitochondrial morphology and in the inheritance of mitochondria. This chain is Mitochondrial distribution and morphology protein 10, found in Cryptococcus neoformans var. neoformans serotype D (strain B-3501A) (Filobasidiella neoformans).